The chain runs to 448 residues: GA-binding protein subunit beta-2 (448 aa).

5 ANK repeats span residues 5–34, 37–66, 70–99, 103–132, and 136–166; these read DLGK…PFTT, LGTS…SRDA, VDRT…DVNA, LKMT…DVHA, and FDKS…QVNV. Ser-256 is subject to Phosphoserine. Disordered regions lie at residues 325–354 and 420–448; these read EEEE…GNER and ELEE…TVSS. Basic and acidic residues predominate over residues 337-354; that stretch reads RIGEKTNSVEESKEGNER. Residues 345–395 adopt a coiled-coil conformation; sequence VEESKEGNERELLQQQLQEANRRAQEYRHQLLKKEQEAEQYRLKLEAIARQ. The segment covering 428 to 448 has biased composition (polar residues); the sequence is VTGSAGTTEPHTRVSMATVSS.

In terms of assembly, heterotetramer of two alpha and two beta subunits. The C-terminal is necessary for the formation of a heterotetrameric GABP-alpha-2/beta-2 complex, and also facilitates homotypic dimerization. Interacts with ADGRB2.

It localises to the nucleus. Its function is as follows. May function as transcription factor capable of interacting with purine rich repeats (GA repeats). This Homo sapiens (Human) protein is GA-binding protein subunit beta-2 (GABPB2).